Consider the following 413-residue polypeptide: Putative adhesin P1-like protein MPN_144 (413 aa).

3 stretches are compositionally biased toward polar residues: residues 1–13 (MGQQGQSGTSAGN), 25–54 (SGDSLTTQDGNATGQQEATNYTNLPPNLTP), and 355–376 (SFGTDHSTQPQSLKTTTPVFGT). Disordered stretches follow at residues 1–60 (MGQQ…DWPN) and 355–413 (SFGT…VSGH). Positions 385 to 399 (LSGGGAGGGSSGSGQ) are enriched in gly residues.

It belongs to the adhesin P1 family.

The chain is Putative adhesin P1-like protein MPN_144 from Mycoplasma pneumoniae (strain ATCC 29342 / M129 / Subtype 1) (Mycoplasmoides pneumoniae).